A 232-amino-acid polypeptide reads, in one-letter code: Small ribosomal subunit protein uS3 (232 aa).

A KH type-2 domain is found at 39–107; sequence IRAFLKKKLY…EVNVNIKEER (69 aa). The segment at 211 to 232 is disordered; the sequence is GVQPEKTEEEAPKKTRRARRGK. A compositionally biased stretch (basic and acidic residues) spans 213–223; the sequence is QPEKTEEEAPK.

Belongs to the universal ribosomal protein uS3 family. In terms of assembly, part of the 30S ribosomal subunit. Forms a tight complex with proteins S10 and S14.

In terms of biological role, binds the lower part of the 30S subunit head. Binds mRNA in the 70S ribosome, positioning it for translation. This Campylobacter concisus (strain 13826) protein is Small ribosomal subunit protein uS3.